An 83-amino-acid polypeptide reads, in one-letter code: Cell division topological specificity factor (83 aa).

This sequence belongs to the MinE family.

Functionally, prevents the cell division inhibition by proteins MinC and MinD at internal division sites while permitting inhibition at polar sites. This ensures cell division at the proper site by restricting the formation of a division septum at the midpoint of the long axis of the cell. This chain is Cell division topological specificity factor, found in Alcanivorax borkumensis (strain ATCC 700651 / DSM 11573 / NCIMB 13689 / SK2).